Reading from the N-terminus, the 286-residue chain is Release factor glutamine methyltransferase (286 aa).

Asp-148 and Asn-194 together coordinate S-adenosyl-L-methionine. 194 to 197 (NPPY) provides a ligand contact to substrate.

The protein belongs to the protein N5-glutamine methyltransferase family. PrmC subfamily.

The catalysed reaction is L-glutaminyl-[peptide chain release factor] + S-adenosyl-L-methionine = N(5)-methyl-L-glutaminyl-[peptide chain release factor] + S-adenosyl-L-homocysteine + H(+). Methylates the class 1 translation termination release factors RF1/PrfA and RF2/PrfB on the glutamine residue of the universally conserved GGQ motif. The protein is Release factor glutamine methyltransferase of Leptospira interrogans serogroup Icterohaemorrhagiae serovar Lai (strain 56601).